Consider the following 523-residue polypeptide: Sialate O-acetylesterase (523 aa).

The N-terminal stretch at 1–23 (MVAPGLVLGLVLPLILWADRSAG) is a signal peptide. N-linked (GlcNAc...) asparagine glycans are attached at residues Asn-107, Asn-138, Asn-267, Asn-290, Asn-401, and Asn-422.

The protein resides in the lysosome. The enzyme catalyses N-acetyl-9-O-acetylneuraminate + H2O = N-acetylneuraminate + acetate + H(+). It catalyses the reaction an Ac-O-9-sialoglycoconjugate + H2O = a sialoglycoconjugate + acetate + H(+). Its function is as follows. Catalyzes the removal of O-acetyl ester groups from position 9 of the free diacetylated sialate N-acetyl-9-O-acetylneuraminate (Neu5,9Ac2) in the cytosol and of the diacetylated sialate residues of sialylglycoconjugates in the lysosomes. Together with the sialate-O-acetyltransferase they regulate the balance of acetylated sialoglycoconjugates, key players in various processes such as cell-cell interactions, host-pathogen recognition, and tumor antigenicity. The sequence is that of Sialate O-acetylesterase (SIAE) from Pongo abelii (Sumatran orangutan).